The sequence spans 152 residues: Ubiquitin-conjugating enzyme E2 N (152 aa).

The region spanning 3 to 149 is the UBC core domain; the sequence is GLPRRIIKET…ARAWTRLYAM (147 aa). N6-acetyllysine is present on K82. Catalysis depends on C87, which acts as the Glycyl thioester intermediate. Residue K92 forms a Glycyl lysine isopeptide (Lys-Gly) (interchain with G-Cter in ISG15) linkage. S131 is subject to Phosphoserine.

The protein belongs to the ubiquitin-conjugating enzyme family. Heterodimer with UBE2V2. Interacts (UBE2V2-UBE2N heterodimer) with the E3 ligase STUB1 (via the U-box domain); the complex has a specific 'Lys-63'-linked polyubiquitination activity. Interacts with RNF8 and RNF168. Interacts with RNF11. Interacts with the E3 ligases, HLTF and SHPRH; the interactions promote the 'Lys-63'-linked polyubiquitination of PCNA upon genotoxic stress and lead to DNA repair. Interacts with ARIH2 (via RING-type 2). Interacts with OTUB1; leading to inhibit E2-conjugating activity. Interacts with GPS2; leading to inhibit E2-conjugating activity. Interacts with RIGI and RNF135; involved in RIGI ubiquitination and activation. Conjugation to ISG15 impairs formation of the thioester bond with ubiquitin but not interaction with UBE2V2.

It catalyses the reaction S-ubiquitinyl-[E1 ubiquitin-activating enzyme]-L-cysteine + [E2 ubiquitin-conjugating enzyme]-L-cysteine = [E1 ubiquitin-activating enzyme]-L-cysteine + S-ubiquitinyl-[E2 ubiquitin-conjugating enzyme]-L-cysteine.. The protein operates within protein modification; protein ubiquitination. Its activity is regulated as follows. Activity is inhibited by binding to OTUB1, which prevents 'Lys-63'-linked polyubiquitination. Activity is inhibited by GPS2, leading to prevent 'Lys-63'-linked polyubiquitination. In terms of biological role, the UBE2V1-UBE2N and UBE2V2-UBE2N heterodimers catalyze the synthesis of non-canonical 'Lys-63'-linked polyubiquitin chains. This type of polyubiquitination does not lead to protein degradation by the proteasome. Mediates transcriptional activation of target genes. Plays a role in the control of progress through the cell cycle and differentiation. Plays a role in the error-free DNA repair pathway and contributes to the survival of cells after DNA damage. Acts together with the E3 ligases, HLTF and SHPRH, in the 'Lys-63'-linked poly-ubiquitination of PCNA upon genotoxic stress, which is required for DNA repair. Appears to act together with E3 ligase RNF5 in the 'Lys-63'-linked polyubiquitination of JKAMP thereby regulating JKAMP function by decreasing its association with components of the proteasome and ERAD. Promotes TRIM5 capsid-specific restriction activity and the UBE2V1-UBE2N heterodimer acts in concert with TRIM5 to generate 'Lys-63'-linked polyubiquitin chains which activate the MAP3K7/TAK1 complex which in turn results in the induction and expression of NF-kappa-B and MAPK-responsive inflammatory genes. Together with RNF135 and UB2V1, catalyzes the viral RNA-dependent 'Lys-63'-linked polyubiquitination of RIGI to activate the downstream signaling pathway that leads to interferon beta production. UBE2V1-UBE2N together with TRAF3IP2 E3 ubiquitin ligase mediate 'Lys-63'-linked polyubiquitination of TRAF6, a component of IL17A-mediated signaling pathway. This is Ubiquitin-conjugating enzyme E2 N (Ube2n) from Rattus norvegicus (Rat).